A 413-amino-acid polypeptide reads, in one-letter code: uncharacterized protein (413 aa).

The chain crosses the membrane as a helical span at residues 25-47 (IVNLSALLPLITSTTSTAGSIIT).

It is found in the host membrane. This is an uncharacterized protein from Acidianus sp. F28 (AFV-2).